The chain runs to 399 residues: MTFKTLDDLTDIAGKRVLVRVDLNVPVKDGQVTDTTRIERVAPTIRELSEKGAKVVLLAHFGRPKGEPVADMSLKAIASAVEEILDQRVYFAADCIGDKAANAIAELNDGEVLLLENTRFHKGEEKNDSDFVTALAANGDIYVNDAFSAAHRAHASTEGLAHHLPAYAGRTMQAELEALEKGLGNPKRPVVAIVGGAKVSTKIDLLQNLVKKVDALVIGGGMANTFLAAQGVDVGKSLCEHDLAETAKAILAAASEAGCAIVLPVDGVVAREFKAGADNEVVDIKAIPADAMVLDVGPKSIEAINEWISRAETLVWNGPLGAFEIAPFDRATVAAAKHAAARTRAGSLVSVAGGGDTVAALNHAEVADDFTYVSTAGGAFLEWMEGKPLPGVDVLRQRN.

Residues 22–24 (DLN), R37, 60–63 (HFGR), R119, and R152 contribute to the substrate site. ATP-binding positions include K202, E324, and 354 to 357 (GGDT).

It belongs to the phosphoglycerate kinase family. In terms of assembly, monomer.

It localises to the cytoplasm. It catalyses the reaction (2R)-3-phosphoglycerate + ATP = (2R)-3-phospho-glyceroyl phosphate + ADP. Its pathway is carbohydrate degradation; glycolysis; pyruvate from D-glyceraldehyde 3-phosphate: step 2/5. In Rhizobium meliloti (strain 1021) (Ensifer meliloti), this protein is Phosphoglycerate kinase.